Here is a 314-residue protein sequence, read N- to C-terminus: tRNA pseudouridine synthase B (314 aa).

Residue Asp54 is the Nucleophile of the active site.

It belongs to the pseudouridine synthase TruB family. Type 1 subfamily.

The catalysed reaction is uridine(55) in tRNA = pseudouridine(55) in tRNA. In terms of biological role, responsible for synthesis of pseudouridine from uracil-55 in the psi GC loop of transfer RNAs. In Cupriavidus metallidurans (strain ATCC 43123 / DSM 2839 / NBRC 102507 / CH34) (Ralstonia metallidurans), this protein is tRNA pseudouridine synthase B.